Here is a 490-residue protein sequence, read N- to C-terminus: Betaine aldehyde dehydrogenase (490 aa).

Positions 26, 27, and 93 each coordinate K(+). 150–152 (GAW) serves as a coordination point for NAD(+). The Charge relay system role is filled by lysine 162. 176-179 (KPSE) contacts NAD(+). Position 180 (valine 180) interacts with K(+). 230 to 233 (GVAS) lines the NAD(+) pocket. Position 246 (leucine 246) interacts with K(+). Glutamate 252 functions as the Proton acceptor in the catalytic mechanism. Glycine 254, cysteine 286, and glutamate 387 together coordinate NAD(+). Cysteine 286 (nucleophile) is an active-site residue. A Cysteine sulfenic acid (-SOH) modification is found at cysteine 286. 2 residues coordinate K(+): lysine 457 and glycine 460. Catalysis depends on glutamate 464, which acts as the Charge relay system.

This sequence belongs to the aldehyde dehydrogenase family. As to quaternary structure, dimer of dimers. K(+) is required as a cofactor.

The enzyme catalyses betaine aldehyde + NAD(+) + H2O = glycine betaine + NADH + 2 H(+). It participates in amine and polyamine biosynthesis; betaine biosynthesis via choline pathway; betaine from betaine aldehyde: step 1/1. Involved in the biosynthesis of the osmoprotectant glycine betaine. Catalyzes the irreversible oxidation of betaine aldehyde to the corresponding acid. The polypeptide is Betaine aldehyde dehydrogenase (Escherichia coli O45:K1 (strain S88 / ExPEC)).